The chain runs to 123 residues: MSVQNICSTKAYDMLISNDNAFLVDVRTREEWQQVGIPHLDNKNKMLFLSWQLNKDFEDNFLSIINDKIHAIIFFLCRSGYRSFIAANFITNIGYKNCYNISDGFEGNNQDKGWKQNNLPWQF.

A Rhodanese domain is found at 17 to 117 (SNDNAFLVDV…NNQDKGWKQN (101 aa)).

This is an uncharacterized protein from Rickettsia rickettsii.